Reading from the N-terminus, the 568-residue chain is UPF0313 protein FN0734 (568 aa).

Residues Ala-289–Glu-562 enclose the Radical SAM core domain. [4Fe-4S] cluster-binding residues include Cys-303, Cys-307, and Cys-310. The interval Val-546 to Lys-568 is disordered.

The protein belongs to the UPF0313 family. [4Fe-4S] cluster serves as cofactor.

This is UPF0313 protein FN0734 from Fusobacterium nucleatum subsp. nucleatum (strain ATCC 25586 / DSM 15643 / BCRC 10681 / CIP 101130 / JCM 8532 / KCTC 2640 / LMG 13131 / VPI 4355).